A 323-amino-acid chain; its full sequence is Transcription factor JunD (323 aa).

Disordered stretches follow at residues 138 to 173 (QNQLGGGGGPNGGAAAAGGGGGGGGGGGGELPAPGL) and 197 to 221 (PFAAPPPRLPPPPPPPLKDEPQIVP). Gly residues predominate over residues 141 to 167 (LGGGGGPNGGAAAAGGGGGGGGGGGGE). Pro residues predominate over residues 198-212 (FAAPPPRLPPPPPPP). The interval 242 to 269 (RIKAERKRLRNRIAASKCRKRKLERISR) is basic motif. The bZIP domain occupies 242–305 (RIKAERKRLR…AQLKQKVLSH (64 aa)). Residues 270-298 (LEEKVKSLKSQNTELASTASLLREQVAQL) are leucine-zipper.

Belongs to the bZIP family. Jun subfamily. Binds DNA as a dimer.

Its subcellular location is the nucleus. The sequence is that of Transcription factor JunD (JUND) from Gallus gallus (Chicken).